The primary structure comprises 287 residues: Pantothenate synthetase (287 aa).

Residue 30–37 (MGALHSGH) coordinates ATP. His37 acts as the Proton donor in catalysis. Position 61 (Gln61) interacts with (R)-pantoate. A beta-alanine-binding site is contributed by Gln61. 152 to 155 (GQKD) contributes to the ATP binding site. Gln158 lines the (R)-pantoate pocket. ATP-binding positions include Ile181 and 189-192 (ESSR).

This sequence belongs to the pantothenate synthetase family. As to quaternary structure, homodimer.

It is found in the cytoplasm. The catalysed reaction is (R)-pantoate + beta-alanine + ATP = (R)-pantothenate + AMP + diphosphate + H(+). It functions in the pathway cofactor biosynthesis; (R)-pantothenate biosynthesis; (R)-pantothenate from (R)-pantoate and beta-alanine: step 1/1. In terms of biological role, catalyzes the condensation of pantoate with beta-alanine in an ATP-dependent reaction via a pantoyl-adenylate intermediate. In Corynebacterium efficiens (strain DSM 44549 / YS-314 / AJ 12310 / JCM 11189 / NBRC 100395), this protein is Pantothenate synthetase.